The sequence spans 158 residues: 6,7-dimethyl-8-ribityllumazine synthase (158 aa).

Residues phenylalanine 22, 57–59, and 81–83 each bind 5-amino-6-(D-ribitylamino)uracil; these read AVE and AVI. A (2S)-2-hydroxy-3-oxobutyl phosphate-binding site is contributed by 86–87; sequence GT. Histidine 89 (proton donor) is an active-site residue. Residue phenylalanine 114 coordinates 5-amino-6-(D-ribitylamino)uracil. Arginine 128 provides a ligand contact to (2S)-2-hydroxy-3-oxobutyl phosphate.

The protein belongs to the DMRL synthase family. In terms of assembly, forms an icosahedral capsid composed of 60 subunits, arranged as a dodecamer of pentamers.

The enzyme catalyses (2S)-2-hydroxy-3-oxobutyl phosphate + 5-amino-6-(D-ribitylamino)uracil = 6,7-dimethyl-8-(1-D-ribityl)lumazine + phosphate + 2 H2O + H(+). Its pathway is cofactor biosynthesis; riboflavin biosynthesis; riboflavin from 2-hydroxy-3-oxobutyl phosphate and 5-amino-6-(D-ribitylamino)uracil: step 1/2. Its function is as follows. Catalyzes the formation of 6,7-dimethyl-8-ribityllumazine by condensation of 5-amino-6-(D-ribitylamino)uracil with 3,4-dihydroxy-2-butanone 4-phosphate. This is the penultimate step in the biosynthesis of riboflavin. This chain is 6,7-dimethyl-8-ribityllumazine synthase, found in Shewanella loihica (strain ATCC BAA-1088 / PV-4).